The following is a 298-amino-acid chain: Protoheme IX farnesyltransferase (298 aa).

9 helical membrane-spanning segments follow: residues 26 to 46 (VVGHIVFTAIIGMFLAVPGVP), 52 to 72 (FWASLGIGFAAASAAALNHFL), 98 to 118 (VVGFALVLGIVAMAILIAFVN), 120 to 140 (LTAFLTFLSLIGYAVIYTVYL), 148 to 168 (IVIGGAAGAAPPVLGWCAVTG), 174 to 194 (ALLLFLLIFVWTPPHFWAYAI), 214 to 234 (IAFTQLHILLYTILLFLAGLM), 241 to 261 (SGEIYLAAALIFGGIFVYYAI), and 278 to 298 (YSLVYLVGIFSALLVDHYIVL).

The protein belongs to the UbiA prenyltransferase family. Protoheme IX farnesyltransferase subfamily.

It is found in the cell inner membrane. It carries out the reaction heme b + (2E,6E)-farnesyl diphosphate + H2O = Fe(II)-heme o + diphosphate. The protein operates within porphyrin-containing compound metabolism; heme O biosynthesis; heme O from protoheme: step 1/1. Its function is as follows. Converts heme B (protoheme IX) to heme O by substitution of the vinyl group on carbon 2 of heme B porphyrin ring with a hydroxyethyl farnesyl side group. In Methylococcus capsulatus (strain ATCC 33009 / NCIMB 11132 / Bath), this protein is Protoheme IX farnesyltransferase.